Reading from the N-terminus, the 467-residue chain is MGATSMLTLLLTHPFEFRVLIQYKLWHEPKRDITQVSEHPTSGWDRPTMRRCWEFLDQTSRSFSGVIKEVEGDLARVICLFYLVLRGLDTIEDDMTLPDEKKQPILRQFHKLAVKPGWTFDECGPKEKDRQLLVEWTVVSEELNRLDACYRDIIIDIAEKMQTGMADYAHKAATTNSIYIGTVDEYNLYCHYVAGLVGEGLTRFWAASGKEAEWLGDQLELTNAMGLMLQKTNIIRDFREDAEERRFFWPREIWGRDAYGKAVGRANGFREMHELYERGNEKQALWVQSGMVVDVLGHATDSLDYLRLLTKQSIFCFCAIPQTMAMATLSLCFMNYDMFHNHIKIRRAEAASLIMRSTNPRDVAYIFRDYARKMHARALPEDPSFLRLSVACGKIEQWCERHYPSFVRLQQVSGGGIVFDPSDARTKVVEAAQARDNELAREKRLAELRDKTGKLERKLRWSQAPSS.

This sequence belongs to the phytoene/squalene synthase family. Mg(2+) serves as cofactor.

It catalyses the reaction 2 (2E,6E)-farnesyl diphosphate + NADPH + H(+) = squalene + 2 diphosphate + NADP(+). The catalysed reaction is 2 (2E,6E)-farnesyl diphosphate + NADH + H(+) = squalene + 2 diphosphate + NAD(+). The protein operates within terpene metabolism; lanosterol biosynthesis; lanosterol from farnesyl diphosphate: step 1/3. Squalene synthase; part of the third module of ergosterol biosynthesis pathway that includes the late steps of the pathway. The third module or late pathway involves the ergosterol synthesis itself through consecutive reactions that mainly occur in the endoplasmic reticulum (ER) membrane. Firstly, the squalene synthase SQS catalyzes the condensation of 2 farnesyl pyrophosphate moieties to form squalene, which is the precursor of all steroids. Secondly, the squalene epoxidase catalyzes the stereospecific oxidation of squalene to (S)-2,3-epoxysqualene, which is considered to be a rate-limiting enzyme in steroid biosynthesis. Then, the lanosterol synthase LS catalyzes the cyclization of (S)-2,3 oxidosqualene to lanosterol, a reaction that forms the sterol core. In the next steps, lanosterol is transformed to ergosterol via a complex process involving various demethylation, reduction and desaturation reactions. Lanosterol is also an intermediate in the biosynthesis of triterpenes such as ganoderic acids (GA), a group of highly oxygenated lanostane-type triterpenoids which are well recognized as a main group of unique bioactive compounds in the medicinal mushroom Ganoderma lucidum. The protein is Squalene synthase of Ganoderma lucidum (Ling zhi medicinal fungus).